A 138-amino-acid chain; its full sequence is Ribulose bisphosphate carboxylase small subunit (138 aa).

This sequence belongs to the RuBisCO small chain family. As to quaternary structure, heterohexadecamer of 8 large and 8 small subunits.

It localises to the plastid. It is found in the chloroplast. Functionally, ruBisCO catalyzes two reactions: the carboxylation of D-ribulose 1,5-bisphosphate, the primary event in carbon dioxide fixation, as well as the oxidative fragmentation of the pentose substrate in the photorespiration process. Both reactions occur simultaneously and in competition at the same active site. Although the small subunit is not catalytic it is essential for maximal activity. The polypeptide is Ribulose bisphosphate carboxylase small subunit (Cyanidium caldarium (Red alga)).